A 517-amino-acid polypeptide reads, in one-letter code: Bifunctional purine biosynthesis protein PurH (517 aa).

The MGS-like domain maps to 1 to 146; it reads MAPIALLSVS…KNHAHVAVLT (146 aa).

This sequence belongs to the PurH family.

The enzyme catalyses (6R)-10-formyltetrahydrofolate + 5-amino-1-(5-phospho-beta-D-ribosyl)imidazole-4-carboxamide = 5-formamido-1-(5-phospho-D-ribosyl)imidazole-4-carboxamide + (6S)-5,6,7,8-tetrahydrofolate. It catalyses the reaction IMP + H2O = 5-formamido-1-(5-phospho-D-ribosyl)imidazole-4-carboxamide. It functions in the pathway purine metabolism; IMP biosynthesis via de novo pathway; 5-formamido-1-(5-phospho-D-ribosyl)imidazole-4-carboxamide from 5-amino-1-(5-phospho-D-ribosyl)imidazole-4-carboxamide (10-formyl THF route): step 1/1. Its pathway is purine metabolism; IMP biosynthesis via de novo pathway; IMP from 5-formamido-1-(5-phospho-D-ribosyl)imidazole-4-carboxamide: step 1/1. The chain is Bifunctional purine biosynthesis protein PurH from Prochlorococcus marinus (strain MIT 9303).